Here is a 240-residue protein sequence, read N- to C-terminus: Sugar fermentation stimulation protein homolog (240 aa).

It belongs to the SfsA family.

The chain is Sugar fermentation stimulation protein homolog from Saccharolobus islandicus (strain L.S.2.15 / Lassen #1) (Sulfolobus islandicus).